Here is a 485-residue protein sequence, read N- to C-terminus: E3 ubiquitin-protein ligase RNF8 (485 aa).

One can recognise an FHA domain in the interval 38-92 (VTVGRGFGVTYQLVSKICPLMISRNHCVLKQNPEGQWTIMDNKSLNGVWLNRARL). Positions 68–72 (QNPEG) are required for interaction with PIWIL1. At serine 157 the chain carries Phosphoserine. Positions 181–220 (CESGQPVKSQGKGEVASTPSDNLDPKLTALEPSKTTGAPI) are disordered. The RING-type zinc-finger motif lies at 403 to 441 (CIICSEYFIEAVTLNCAHSFCSYCINEWMKRKIECPICR).

Belongs to the RNF8 family. As to quaternary structure, homodimer. Forms a E2-E3 ubiquitin ligase complex composed of the RNF8 homodimer and a E2 heterodimer of UBE2N and UBE2V2. Interacts with class III E2s, including UBE2E1, UBE2E2, and UBE2E3 and with UBE2N. Interacts with RXRA. Interacts (via FHA domain) with ATM-phosphorylated MDC1. Interacts (via FHA domain) with 'Thr-4827' phosphorylated HERC2 (via C-terminus). Interacts with PIWIL1; leading to sequester RNF8 in the cytoplasm. Interacts with WRAP53/TCAB1. (Microbial infection) Interacts (via FHA domain) with phosphorylated human herpesvirus 1 ICP0 protein; leading to RNF8 degradation by the proteasome. Post-translationally, autoubiquitinated through 'Lys-48' and 'Lys-63' of ubiquitin. 'Lys-63' polyubiquitination is mediated by UBE2N. 'Lys-29'-type polyubiquitination is also observed, but it doesn't require its own functional RING-type zinc finger. As to expression, ubiquitous. In fetal tissues, highest expression in brain, thymus and liver. In adult tissues, highest levels in brain and testis, lowest levels in peripheral blood cells.

Its subcellular location is the nucleus. It is found in the cytoplasm. The protein resides in the midbody. The protein localises to the chromosome. It localises to the telomere. The catalysed reaction is S-ubiquitinyl-[E2 ubiquitin-conjugating enzyme]-L-cysteine + [acceptor protein]-L-lysine = [E2 ubiquitin-conjugating enzyme]-L-cysteine + N(6)-ubiquitinyl-[acceptor protein]-L-lysine.. It functions in the pathway protein modification; protein ubiquitination. E3 ubiquitin-protein ligase that plays a key role in DNA damage signaling via 2 distinct roles: by mediating the 'Lys-63'-linked ubiquitination of histones H2A and H2AX and promoting the recruitment of DNA repair proteins at double-strand breaks (DSBs) sites, and by catalyzing 'Lys-48'-linked ubiquitination to remove target proteins from DNA damage sites. Following DNA DSBs, it is recruited to the sites of damage by ATM-phosphorylated MDC1 and catalyzes the 'Lys-63'-linked ubiquitination of histones H2A and H2AX, thereby promoting the formation of TP53BP1 and BRCA1 ionizing radiation-induced foci (IRIF). Also controls the recruitment of UIMC1-BRCC3 (RAP80-BRCC36) and PAXIP1/PTIP to DNA damage sites. Promotes the recruitment of NBN to DNA damage sites by catalyzing 'Lys-6'-linked ubiquitination of NBN. Also recruited at DNA interstrand cross-links (ICLs) sites and catalyzes 'Lys-63'-linked ubiquitination of histones H2A and H2AX, leading to recruitment of FAAP20/C1orf86 and Fanconi anemia (FA) complex, followed by interstrand cross-link repair. H2A ubiquitination also mediates the ATM-dependent transcriptional silencing at regions flanking DSBs in cis, a mechanism to avoid collision between transcription and repair intermediates. Promotes the formation of 'Lys-63'-linked polyubiquitin chains via interactions with the specific ubiquitin-conjugating UBE2N/UBC13 and ubiquitinates non-histone substrates such as PCNA. Substrates that are polyubiquitinated at 'Lys-63' are usually not targeted for degradation. Also catalyzes the formation of 'Lys-48'-linked polyubiquitin chains via interaction with the ubiquitin-conjugating UBE2L6/UBCH8, leading to degradation of substrate proteins such as CHEK2, JMJD2A/KDM4A and KU80/XRCC5: it is still unclear how the preference toward 'Lys-48'- versus 'Lys-63'-linked ubiquitination is regulated but it could be due to RNF8 ability to interact with specific E2 specific ligases. For instance, interaction with phosphorylated HERC2 promotes the association between RNF8 and UBE2N/UBC13 and favors the specific formation of 'Lys-63'-linked ubiquitin chains. Promotes non-homologous end joining (NHEJ) by promoting the 'Lys-48'-linked ubiquitination and degradation the of KU80/XRCC5. Following DNA damage, mediates the ubiquitination and degradation of JMJD2A/KDM4A in collaboration with RNF168, leading to unmask H4K20me2 mark and promote the recruitment of TP53BP1 at DNA damage sites. Following DNA damage, mediates the ubiquitination and degradation of POLD4/p12, a subunit of DNA polymerase delta. In the absence of POLD4, DNA polymerase delta complex exhibits higher proofreading activity. In addition to its function in damage signaling, also plays a role in higher-order chromatin structure by mediating extensive chromatin decondensation. Involved in the activation of ATM by promoting histone H2B ubiquitination, which indirectly triggers histone H4 'Lys-16' acetylation (H4K16ac), establishing a chromatin environment that promotes efficient activation of ATM kinase. Required in the testis, where it plays a role in the replacement of histones during spermatogenesis. At uncapped telomeres, promotes the joining of deprotected chromosome ends by inducing H2A ubiquitination and TP53BP1 recruitment, suggesting that it may enhance cancer development by aggravating telomere-induced genome instability in case of telomeric crisis. Promotes the assembly of RAD51 at DNA DSBs in the absence of BRCA1 and TP53BP1 Also involved in class switch recombination in immune system, via its role in regulation of DSBs repair. May be required for proper exit from mitosis after spindle checkpoint activation and may regulate cytokinesis. May play a role in the regulation of RXRA-mediated transcriptional activity. Not involved in RXRA ubiquitination by UBE2E2. The protein is E3 ubiquitin-protein ligase RNF8 of Homo sapiens (Human).